The primary structure comprises 204 residues: Phosphopantothenoylcysteine decarboxylase (204 aa).

FMN-binding positions include phenylalanine 59 and 104–107; that span reads DANT. Substrate is bound at residue asparagine 140. Cysteine 173 serves as the catalytic Proton donor.

It belongs to the HFCD (homooligomeric flavin containing Cys decarboxylase) superfamily. Homotrimer. Requires FMN as cofactor.

It carries out the reaction N-[(R)-4-phosphopantothenoyl]-L-cysteine + H(+) = (R)-4'-phosphopantetheine + CO2. It functions in the pathway cofactor biosynthesis; coenzyme A biosynthesis; CoA from (R)-pantothenate: step 3/5. Catalyzes the decarboxylation of the cysteine moiety of 4-phosphopantothenoylcysteine to form 4'-phosphopantotheine and this reaction forms part of the biosynthesis of coenzyme A. The chain is Phosphopantothenoylcysteine decarboxylase (PPCDC) from Homo sapiens (Human).